The primary structure comprises 344 residues: Sensor histidine kinase GraS (344 aa).

2 helical membrane passes run 18-38 and 43-63; these read IFWI…DYDI and IGFI…FTFL. The Histidine kinase domain occupies 126–332; sequence EFVHDIKTPV…TFVLTFPKQN (207 aa). A Phosphohistidine; by autocatalysis modification is found at H129.

In terms of processing, autophosphorylated.

Its subcellular location is the cell membrane. It catalyses the reaction ATP + protein L-histidine = ADP + protein N-phospho-L-histidine.. Member of the two-component regulatory system GraR/GraS involved in resistance against cationic antimicrobial peptides (CAMPs). GraS probably functions as a sensor protein kinase which is autophosphorylated at a histidine residue and transfers its phosphate group to GraR. This chain is Sensor histidine kinase GraS (graS), found in Staphylococcus haemolyticus (strain JCSC1435).